Reading from the N-terminus, the 721-residue chain is Long-chain-fatty-acid--CoA ligase ACSBG1 (721 aa).

The segment at 1–64 is disordered; it reads MPRGSEAGYC…SHGLELSAPE (64 aa). Polar residues predominate over residues 26–52; it reads QQGASLGTSQDNSQTSSLIDGQTLSKE. Phosphoserine is present on residues S34, S50, S53, and S70. Residues 279–287, 469–474, D547, and R562 each bind ATP; these read TSGTTGNPK and AGYGLS. Residue Y655 is modified to Phosphotyrosine. Position 698 (K698) interacts with ATP.

It belongs to the ATP-dependent AMP-binding enzyme family. Bubblegum subfamily. As to expression, mainly expressed in brain. Also expressed in adrenal gland and testis. In brain, it is present in cerebral cortical and cerebellar neurons and in steroidogenic cells of the adrenal gland, testis and ovary (at protein level).

The protein resides in the cytoplasm. It is found in the cytoplasmic vesicle. It localises to the microsome. The protein localises to the endoplasmic reticulum. Its subcellular location is the cell membrane. The enzyme catalyses a long-chain fatty acid + ATP + CoA = a long-chain fatty acyl-CoA + AMP + diphosphate. It carries out the reaction (E)-hexadec-2-enoate + ATP + CoA = (2E)-hexadecenoyl-CoA + AMP + diphosphate. It catalyses the reaction hexadecanoate + ATP + CoA = hexadecanoyl-CoA + AMP + diphosphate. Functionally, catalyzes the conversion of fatty acids such as long-chain and very long-chain fatty acids to their active form acyl-CoAs for both synthesis of cellular lipids, and degradation via beta-oxidation. Can activate diverse saturated, monosaturated and polyunsaturated fatty acids. The chain is Long-chain-fatty-acid--CoA ligase ACSBG1 from Mus musculus (Mouse).